Reading from the N-terminus, the 1185-residue chain is Ubiquitin carboxyl-terminal hydrolase 36 (1185 aa).

A compositionally biased stretch (polar residues) spans 126 to 169; that stretch reads TGKALSSNGHDNTNGVNGSSAATVNGNRKQTVEQSNQNSTTNPN. The disordered stretch occupies residues 126–174; the sequence is TGKALSSNGHDNTNGVNGSSAATVNGNRKQTVEQSNQNSTTNPNELPKP. Positions 199 to 509 constitute a USP domain; the sequence is AGMLNVGNTC…NAYIMFYELD (311 aa). Catalysis depends on Cys-208, which acts as the Nucleophile. His-468 (proton acceptor) is an active-site residue. Ser-552 and Ser-554 each carry phosphoserine. A compositionally biased stretch (low complexity) spans 642–658; sequence ANSNKSSCNNNTLTTNS. 4 disordered regions span residues 642 to 804, 818 to 975, 1056 to 1122, and 1136 to 1185; these read ANSN…TDAI, HRAT…YQSE, APTL…GSFP, and NKFK…QQQS. The segment covering 670–683 has biased composition (acidic residues); the sequence is SDEEDEDEDSDDDV. A Phosphothreonine modification is found at Thr-716. Phosphoserine is present on residues Ser-726 and Ser-728. Low complexity-rich tracts occupy residues 778 to 797 and 836 to 853; these read KSNG…SNNN and QQQQ…SLIS. The residue at position 867 (Ser-867) is a Phosphoserine. Thr-870 is modified (phosphothreonine). A Phosphoserine modification is found at Ser-873. Positions 891-920 are enriched in acidic residues; that stretch reads DDNDDDDEDADEEDDADADAEQEEYDDEVV. 2 stretches are compositionally biased toward polar residues: residues 924–942 and 959–975; these read TTPS…SKPS and SAKS…YQSE. A Phosphothreonine modification is found at Thr-925. The span at 1062–1071 shows a compositional bias: basic and acidic residues; the sequence is EAREQRKRDA. 2 stretches are compositionally biased toward low complexity: residues 1151 to 1161 and 1172 to 1185; these read QQQRALQRHLA and QSTG…QQQS.

Belongs to the peptidase C19 family. As to quaternary structure, interacts with atms/PAF1, but not with CycT.

The protein resides in the nucleus. The protein localises to the nucleolus. It catalyses the reaction Thiol-dependent hydrolysis of ester, thioester, amide, peptide and isopeptide bonds formed by the C-terminal Gly of ubiquitin (a 76-residue protein attached to proteins as an intracellular targeting signal).. Functionally, required for maintaining multiple types of adult stem cells, including male and female germline, epithelial follicle cell and intestinal stem cells. May function as a transcriptional repressor by continually deubiquiting histone H2B at the promoters of genes critical for cellular differentiation, thereby preventing histone H3 'Lys-4' trimethylation (H3K4). Controls selective autophagy activation by ubiquitinated proteins. The sequence is that of Ubiquitin carboxyl-terminal hydrolase 36 (Usp36) from Drosophila mojavensis (Fruit fly).